Consider the following 100-residue polypeptide: Large ribosomal subunit protein bL27 (100 aa).

The propeptide occupies 1-13 (MNKLYWLTDLQLF). The disordered stretch occupies residues 17-39 (KGVGSSKNGRDSNPKYLGAKLGD).

It belongs to the bacterial ribosomal protein bL27 family. In terms of processing, the N-terminus is cleaved by ribosomal processing cysteine protease Prp.

This is Large ribosomal subunit protein bL27 from Ureaplasma parvum serovar 3 (strain ATCC 700970).